Here is a 123-residue protein sequence, read N- to C-terminus: Small ribosomal subunit protein uS13 (123 aa).

Residues Pro-97–Lys-123 are disordered.

It belongs to the universal ribosomal protein uS13 family. As to quaternary structure, part of the 30S ribosomal subunit. Forms a loose heterodimer with protein S19. Forms two bridges to the 50S subunit in the 70S ribosome.

Functionally, located at the top of the head of the 30S subunit, it contacts several helices of the 16S rRNA. In the 70S ribosome it contacts the 23S rRNA (bridge B1a) and protein L5 of the 50S subunit (bridge B1b), connecting the 2 subunits; these bridges are implicated in subunit movement. Contacts the tRNAs in the A and P-sites. This chain is Small ribosomal subunit protein uS13, found in Pelotomaculum thermopropionicum (strain DSM 13744 / JCM 10971 / SI).